The primary structure comprises 313 residues: MSDTFEPIRIVALYHFTPFEDPAALRGPLLELCEKEGIKGILLLAREGINGTIAGTDEGMERVMAHIRALPGCADLESKDSRAPELPFRRMKVRLKKEIVTMGEPDIDPRQGVGRYVAPEDWNALISDPDTILIDTRNDYEVAIGTFKGAEDPKTKSFREFPEWFRRRRQELEAKGRLPKIAMFCTGGIRCEKSTSFARAEGVDEVYHLKGGILKYLETVPEEESLWEGECFVFDQRVSVKHGLEIGTHDVCHACRRPLNEKDKASPLFVQGVSCPHCHNERTEEQRHRYAERERQEALAQARRAGHLGVRQK.

A Rhodanese domain is found at 127-225 (SDPDTILIDT…YLETVPEEES (99 aa)). Catalysis depends on Cys-185, which acts as the Cysteine persulfide intermediate.

This sequence belongs to the TrhO family.

The enzyme catalyses uridine(34) in tRNA + AH2 + O2 = 5-hydroxyuridine(34) in tRNA + A + H2O. Catalyzes oxygen-dependent 5-hydroxyuridine (ho5U) modification at position 34 in tRNAs. The protein is tRNA uridine(34) hydroxylase of Gluconobacter oxydans (strain 621H) (Gluconobacter suboxydans).